Reading from the N-terminus, the 241-residue chain is Uridylate kinase (241 aa).

14-17 (KLSG) lines the ATP pocket. G56 provides a ligand contact to UMP. Residues G57 and R61 each contribute to the ATP site. UMP is bound by residues D77 and 138 to 145 (TGNPFFTT). Residues T165, Y171, and D174 each coordinate ATP.

Belongs to the UMP kinase family. Homohexamer.

The protein resides in the cytoplasm. The enzyme catalyses UMP + ATP = UDP + ADP. It participates in pyrimidine metabolism; CTP biosynthesis via de novo pathway; UDP from UMP (UMPK route): step 1/1. With respect to regulation, inhibited by UTP. Functionally, catalyzes the reversible phosphorylation of UMP to UDP. The chain is Uridylate kinase from Psychrobacter arcticus (strain DSM 17307 / VKM B-2377 / 273-4).